Reading from the N-terminus, the 583-residue chain is 2-succinyl-5-enolpyruvyl-6-hydroxy-3-cyclohexene-1-carboxylate synthase (583 aa).

Belongs to the TPP enzyme family. MenD subfamily. As to quaternary structure, homodimer. Mg(2+) serves as cofactor. The cofactor is Mn(2+). Thiamine diphosphate is required as a cofactor.

It carries out the reaction isochorismate + 2-oxoglutarate + H(+) = 5-enolpyruvoyl-6-hydroxy-2-succinyl-cyclohex-3-ene-1-carboxylate + CO2. It functions in the pathway quinol/quinone metabolism; 1,4-dihydroxy-2-naphthoate biosynthesis; 1,4-dihydroxy-2-naphthoate from chorismate: step 2/7. It participates in quinol/quinone metabolism; menaquinone biosynthesis. In terms of biological role, catalyzes the thiamine diphosphate-dependent decarboxylation of 2-oxoglutarate and the subsequent addition of the resulting succinic semialdehyde-thiamine pyrophosphate anion to isochorismate to yield 2-succinyl-5-enolpyruvyl-6-hydroxy-3-cyclohexene-1-carboxylate (SEPHCHC). This Chlorobaculum parvum (strain DSM 263 / NCIMB 8327) (Chlorobium vibrioforme subsp. thiosulfatophilum) protein is 2-succinyl-5-enolpyruvyl-6-hydroxy-3-cyclohexene-1-carboxylate synthase.